Consider the following 121-residue polypeptide: Large ribosomal subunit protein uL18 (121 aa).

It belongs to the universal ribosomal protein uL18 family. In terms of assembly, part of the 50S ribosomal subunit; part of the 5S rRNA/L5/L18/L25 subcomplex. Contacts the 5S and 23S rRNAs.

In terms of biological role, this is one of the proteins that bind and probably mediate the attachment of the 5S RNA into the large ribosomal subunit, where it forms part of the central protuberance. This Bdellovibrio bacteriovorus (strain ATCC 15356 / DSM 50701 / NCIMB 9529 / HD100) protein is Large ribosomal subunit protein uL18.